The primary structure comprises 197 residues: Protein GrpE (197 aa).

Residues 1–31 (MSDDTKKQDTAADAEVEKEMEGVPEHLRDDR) show a composition bias toward basic and acidic residues. A disordered region spans residues 1–48 (MSDDTKKQDTAADAEVEKEMEGVPEHLRDDRGSEEDASDDLSAALESL).

The protein belongs to the GrpE family. In terms of assembly, homodimer.

It is found in the cytoplasm. Participates actively in the response to hyperosmotic and heat shock by preventing the aggregation of stress-denatured proteins, in association with DnaK and GrpE. It is the nucleotide exchange factor for DnaK and may function as a thermosensor. Unfolded proteins bind initially to DnaJ; upon interaction with the DnaJ-bound protein, DnaK hydrolyzes its bound ATP, resulting in the formation of a stable complex. GrpE releases ADP from DnaK; ATP binding to DnaK triggers the release of the substrate protein, thus completing the reaction cycle. Several rounds of ATP-dependent interactions between DnaJ, DnaK and GrpE are required for fully efficient folding. In Erythrobacter litoralis (strain HTCC2594), this protein is Protein GrpE.